The chain runs to 403 residues: MAIKTVQDLINEGVQGRHVLVRADLNVPLSDGNITDPGRIDASVPTLKALLEAGARVVVSAHLGRPKGEFKEEFSLAPVAEALAERLDQWVPLATDVTGEDAHERANGLDDGDILLLENVRFDARETSKDETERTEFAAELAALTGDNGAFVSDGFGVVHRKQASVYDVAKKLPHYAGGLVEAELNVLRKVSEAPEKPYAVVLGGSKVSDKLGVIEALAPRVDNLIIGGGMCFTFLAAKGYEVGGSLLQEDMIDTCKDLLERFGDVIALPTDVVVAERFDKDADHRTVDLNSIPEGWMGLDIGPESVKAFAEVLSKSKTVFWNGPMGVFEFPAFAEGTRGVAQAIIDATAAGAFSVVGGGDSAAAVRTLGLNEEGFSHISTGGGASLEFLEGKELPGVSVLES.

Residues 24–26 (DLN), R39, 62–65 (HLGR), R121, and R161 contribute to the substrate site. ATP-binding positions include K211, G299, E330, and 359–362 (GGDS).

This sequence belongs to the phosphoglycerate kinase family. As to quaternary structure, monomer.

Its subcellular location is the cytoplasm. It catalyses the reaction (2R)-3-phosphoglycerate + ATP = (2R)-3-phospho-glyceroyl phosphate + ADP. Its pathway is carbohydrate degradation; glycolysis; pyruvate from D-glyceraldehyde 3-phosphate: step 2/5. This chain is Phosphoglycerate kinase, found in Corynebacterium jeikeium (strain K411).